We begin with the raw amino-acid sequence, 456 residues long: UPF0496 protein 4 (456 aa).

A helical transmembrane segment spans residues 195-217 (VLMRALYGIESVTVFVCSIFVAV). The disordered stretch occupies residues 368 to 390 (QDSNVKQANGSSDESALVVPERT). Positions 371–381 (NVKQANGSSDE) are enriched in polar residues.

This sequence belongs to the ROH1 family.

The protein resides in the membrane. This is UPF0496 protein 4 from Oryza sativa subsp. japonica (Rice).